A 269-amino-acid chain; its full sequence is Regulatory protein RecX (269 aa).

The protein belongs to the RecX family.

It localises to the cytoplasm. Functionally, modulates RecA activity. This chain is Regulatory protein RecX, found in Listeria monocytogenes serotype 4a (strain HCC23).